A 117-amino-acid chain; its full sequence is Transcription elongation factor A protein-like 8 (117 aa).

2 stretches are compositionally biased toward basic and acidic residues: residues 1–10 and 61–75; these read MQKSCEENEG and FKEDTPVRHLDPEEM. The disordered stretch occupies residues 1–75; it reads MQKSCEENEG…PVRHLDPEEM (75 aa). Residues 73-100 are a coiled coil; sequence EEMIRGVDELERLREEIRRVRNKFVMMH.

This sequence belongs to the TFS-II family. TFA subfamily.

It localises to the nucleus. In terms of biological role, may be involved in transcriptional regulation. This Homo sapiens (Human) protein is Transcription elongation factor A protein-like 8 (TCEAL8).